The chain runs to 188 residues: Pyridoxal 5'-phosphate synthase subunit PdxT (188 aa).

An L-glutamine-binding site is contributed by glycine 46–serine 48. Residue cysteine 78 is the Nucleophile of the active site. Residues arginine 105 and isoleucine 134–arginine 135 contribute to the L-glutamine site. Residues histidine 170 and glutamate 172 each act as charge relay system in the active site.

This sequence belongs to the glutaminase PdxT/SNO family. In terms of assembly, in the presence of PdxS, forms a dodecamer of heterodimers. Only shows activity in the heterodimer.

It carries out the reaction aldehydo-D-ribose 5-phosphate + D-glyceraldehyde 3-phosphate + L-glutamine = pyridoxal 5'-phosphate + L-glutamate + phosphate + 3 H2O + H(+). The enzyme catalyses L-glutamine + H2O = L-glutamate + NH4(+). Its pathway is cofactor biosynthesis; pyridoxal 5'-phosphate biosynthesis. Catalyzes the hydrolysis of glutamine to glutamate and ammonia as part of the biosynthesis of pyridoxal 5'-phosphate. The resulting ammonia molecule is channeled to the active site of PdxS. This is Pyridoxal 5'-phosphate synthase subunit PdxT from Thermotoga neapolitana (strain ATCC 49049 / DSM 4359 / NBRC 107923 / NS-E).